The primary structure comprises 178 residues: Transcription factor E (178 aa).

The HTH TFE/IIEalpha-type domain maps to 3 to 86; sequence AHEALAEIAG…YWRITDEPIQ (84 aa).

It belongs to the TFE family. In terms of assembly, monomer. Interaction with RNA polymerase subunits RpoF and RpoE is necessary for Tfe stimulatory transcription activity. Able to interact with Tbp and RNA polymerase in the absence of DNA promoter. Interacts both with the preinitiation and elongation complexes.

In terms of biological role, transcription factor that plays a role in the activation of archaeal genes transcribed by RNA polymerase. Facilitates transcription initiation by enhancing TATA-box recognition by TATA-box-binding protein (Tbp), and transcription factor B (Tfb) and RNA polymerase recruitment. Not absolutely required for transcription in vitro, but particularly important in cases where Tbp or Tfb function is not optimal. It dynamically alters the nucleic acid-binding properties of RNA polymerases by stabilizing the initiation complex and destabilizing elongation complexes. Seems to translocate with the RNA polymerase following initiation and acts by binding to the non template strand of the transcription bubble in elongation complexes. The protein is Transcription factor E of Thermofilum pendens (strain DSM 2475 / Hrk 5).